The primary structure comprises 501 residues: uncharacterized protein (501 aa).

A helical transmembrane segment spans residues 26-46; the sequence is ILLLLLGLIVLVNIGINVATM. 2 disordered regions span residues 316–384 and 409–501; these read RGTE…VRRR and EASH…EKLN. Positions 476 to 490 are enriched in low complexity; that stretch reads RSSSLPPASTSTLRP.

It is found in the membrane. This is an uncharacterized protein from Homo sapiens (Human).